A 355-amino-acid polypeptide reads, in one-letter code: tRNA N6-adenosine threonylcarbamoyltransferase (355 aa).

Fe cation contacts are provided by His-113 and His-117. Substrate-binding positions include 135–139 (LASGG), Asp-168, Gly-181, and Asn-279. Residue Asp-307 participates in Fe cation binding.

The protein belongs to the KAE1 / TsaD family. Requires Fe(2+) as cofactor.

The protein localises to the cytoplasm. The catalysed reaction is L-threonylcarbamoyladenylate + adenosine(37) in tRNA = N(6)-L-threonylcarbamoyladenosine(37) in tRNA + AMP + H(+). In terms of biological role, required for the formation of a threonylcarbamoyl group on adenosine at position 37 (t(6)A37) in tRNAs that read codons beginning with adenine. Is involved in the transfer of the threonylcarbamoyl moiety of threonylcarbamoyl-AMP (TC-AMP) to the N6 group of A37, together with TsaE and TsaB. TsaD likely plays a direct catalytic role in this reaction. In Bradyrhizobium sp. (strain BTAi1 / ATCC BAA-1182), this protein is tRNA N6-adenosine threonylcarbamoyltransferase.